The primary structure comprises 311 residues: Dehydrogenase/reductase SDR family member 7C (311 aa).

Positions 1-18 (MGVTAVLMLPLLLLGISG) are cleaved as a signal peptide. NAD(+)-binding residues include Ser47, Leu49, Tyr191, Lys195, and Ser226. The active-site Proton acceptor is the Tyr191.

The protein belongs to the short-chain dehydrogenases/reductases (SDR) family.

Its subcellular location is the sarcoplasmic reticulum membrane. It catalyses the reaction all-trans-retinol + NAD(+) = all-trans-retinal + NADH + H(+). Its function is as follows. NADH-dependent oxidoreductase which catalyzes the oxidation of all-trans-retinol to all-trans-retinal. Plays a role in the regulation of cardiac and skeletal muscle metabolic functions. Maintains Ca(2+) intracellular homeostasis by repressing Ca(2+) release from the sarcoplasmic reticulum (SR) in myotubes, possibly through local alternations in NAD/NADH or retinol/retinal. Also plays a role in Ca(2+) homeostasis by controlling Ca(2+) overload in the cytosol and the SR in myotubes. Involved in glucose uptake into skeletal muscles and muscle performance by activating PI3K and mTORC2-mediated AKT1 phosphorylation signaling pathways, possibly through the action of its downstream catalytic product all-trans-retinoic acid. In Bos taurus (Bovine), this protein is Dehydrogenase/reductase SDR family member 7C (DHRS7C).